The following is a 273-amino-acid chain: MSQHPDINTNVDATSLTDDQKSLDTNATSGNEVAPDGNKHIRIVNTFMKRRTHMNKNAELALTAPEFAHYLVNNSFGDGNLEGIDDLRALFAELPNGSEAPLTLEIGFGLGDSFIEMAAAEPSRNFVGIEVHEPGIGKCAYMAGTQNLSNVRIINGDAIQLLKQLPENHIDRIQLYFPDPWQKKRHHKRRFVSPERMAIVTRSLKQGGWFHTATDWEHYAFWMVEVLDGFVGLSNQAGAGNFTSRPDFRPMTKFERRGLASGHGVWDLIYLKD.

Polar residues predominate over residues 1–31; the sequence is MSQHPDINTNVDATSLTDDQKSLDTNATSGN. The disordered stretch occupies residues 1 to 36; the sequence is MSQHPDINTNVDATSLTDDQKSLDTNATSGNEVAPD. Residues glutamate 105, glutamate 130, aspartate 157, and aspartate 179 each coordinate S-adenosyl-L-methionine. Aspartate 179 is a catalytic residue. Residues lysine 183, aspartate 215, and 252 to 255 each bind substrate; that span reads TKFE.

It belongs to the class I-like SAM-binding methyltransferase superfamily. TrmB family.

It carries out the reaction guanosine(46) in tRNA + S-adenosyl-L-methionine = N(7)-methylguanosine(46) in tRNA + S-adenosyl-L-homocysteine. Its pathway is tRNA modification; N(7)-methylguanine-tRNA biosynthesis. In terms of biological role, catalyzes the formation of N(7)-methylguanine at position 46 (m7G46) in tRNA. The protein is tRNA (guanine-N(7)-)-methyltransferase of Psychrobacter cryohalolentis (strain ATCC BAA-1226 / DSM 17306 / VKM B-2378 / K5).